We begin with the raw amino-acid sequence, 631 residues long: 2-isopropylmalate synthase 2, chloroplastic (631 aa).

The N-terminal 46 residues, 1–46 (MESSILKSPNLSSPSFGVPSIPALSSSSTSPFSSLHLRSQNHRTIS), are a transit peptide targeting the chloroplast. Residues 87–360 (VRIFDTTLRD…FTGIDTRHIV (274 aa)) enclose the Pyruvate carboxyltransferase domain. Positions 96, 293, and 329 each coordinate a divalent metal cation.

It belongs to the alpha-IPM synthase/homocitrate synthase family. LeuA type 1 subfamily. In terms of assembly, homotetramer. Mg(2+) is required as a cofactor. It depends on Mn(2+) as a cofactor. Expressed in roots, stems, leaves, flowers and siliques.

The protein localises to the plastid. Its subcellular location is the chloroplast. The catalysed reaction is 3-methyl-2-oxobutanoate + acetyl-CoA + H2O = (2S)-2-isopropylmalate + CoA + H(+). Its pathway is amino-acid biosynthesis; L-leucine biosynthesis; L-leucine from 3-methyl-2-oxobutanoate: step 1/4. Its activity is regulated as follows. Feedback inhibition by Leu. Its function is as follows. Catalyzes the condensation of the acetyl group of acetyl-CoA with 3-methyl-2-oxobutanoate (2-oxoisovalerate) to form 3-carboxy-3-hydroxy-4-methylpentanoate (2-isopropylmalate). Involved in Leu biosynthesis, but does not participate in the chain elongation of glucosinolates. This chain is 2-isopropylmalate synthase 2, chloroplastic, found in Arabidopsis thaliana (Mouse-ear cress).